A 498-amino-acid polypeptide reads, in one-letter code: MTLDSYNIFNDEYLFNMPLSPLPKVLGNFETGQSVLTLTTPTLTPTTTRNIEDTLGHLLSDTQTDRVAGCAGFAVPKVLPNAMGAIDALGMGIPTCVSSLPLQQTYDASLGQGSESEDSNASYNDTQMNEEQDTTDTSSAHTDSTSYQAGHIMAGSVNGGGVNNFTNVLAAVSSSRGSASVGSSNANTSNTPARRGGGRRPNRSTNMTPEEEQKRAVRRERNKQAAARCRKRRVDQTNELTEEVEQLEKRRDSMRKEFEALTNSKKQLEYLLATHRSTCQKIRSDMLSVATCNGLIAPAGLLSAGSSGSGASSHHNHNSNDSSNGTITGMDATLNSTGRSNSPLDLKPAANIDSLLLHIKDEPLDGAIDSGSSLDRFPVTSNGSSINNINSIGNNMNSPTLNALNKVPKERPNTLAFQRPLGQMHLSMANNKAGGPTQIQGVPIQTPSTGTFNLVSLMDGGTGLTPVSGPLVPNSSSTNKHPLELPTPTAEPSKLVSL.

A compositionally biased stretch (polar residues) spans 108 to 127; the sequence is ASLGQGSESEDSNASYNDTQ. 2 disordered regions span residues 108 to 144 and 177 to 234; these read ASLGQGSESEDSNASYNDTQMNEEQDTTDTSSAHTDS and GSAS…KRRV. Low complexity-rich tracts occupy residues 135–144 and 177–191; these read TDTSSAHTDS and GSASVGSSNANTSNT. The bZIP domain occupies 212–275; sequence EQKRAVRRER…KQLEYLLATH (64 aa). A basic motif region spans residues 214-233; the sequence is KRAVRRERNKQAAARCRKRR. The tract at residues 240 to 247 is leucine-zipper; it reads LTEEVEQL. Residues 304–325 show a composition bias toward low complexity; that stretch reads AGSSGSGASSHHNHNSNDSSNG. Disordered stretches follow at residues 304–345 and 465–498; these read AGSS…SPLD and TPVSGPLVPNSSSTNKHPLELPTPTAEPSKLVSL. The segment covering 333-343 has biased composition (polar residues); the sequence is TLNSTGRSNSP. The residue at position 342 (S342) is a Phosphoserine.

This sequence belongs to the bZIP family. Fos subfamily. In terms of assembly, homodimer. Heterodimer with Jra. The kay-Jra heterodimer binds more stably to the AP-1 site than either of the two proteins alone.

Its subcellular location is the nucleus. Functionally, developmentally regulated transcription factor AP-1 binds and recognizes the enhancer DNA sequence: 5'-TGA[CG]TCA-3'. May play a role in the function or determination of a particular subset of cells in the developing embryo. It is able to carry out its function either independently of or in conjunction with Jra. The polypeptide is Transcription factor kayak (Drosophila simulans (Fruit fly)).